The following is a 481-amino-acid chain: FAD-linked oxidoreductase afoF (481 aa).

An N-terminal signal peptide occupies residues 1–16; that stretch reads MRFLLQSITLVAAARA. Residues 52-227 form the FAD-binding PCMH-type domain; the sequence is SEWRPPTWTG…TAATFKMFDQ (176 aa). Residue asparagine 82 is glycosylated (N-linked (GlcNAc...) asparagine). Histidine 92 carries the post-translational modification Pros-8alpha-FAD histidine. Residues asparagine 196, asparagine 241, asparagine 276, asparagine 309, asparagine 312, and asparagine 376 are each glycosylated (N-linked (GlcNAc...) asparagine).

It belongs to the oxygen-dependent FAD-linked oxidoreductase family. FAD is required as a cofactor.

Functionally, FAD-linked oxidoreductase; part of the gene cluster that mediates the biosynthesis of asperfuranone, a probable antitumor agent. The polyketide synthase afoG is responsible for producing the 3,5-dimethyloctadienone moiety from acetyl-CoA, three malonyl-CoA, and two S-adenosyl methionines (SAM). The 3,5-dimethyloctadienone moiety is then loaded onto the SAT domain of afoE and extended with four malonyl-CoA and one SAM, which leads to the formation of 2,4-dihydroxy-6-(5,7-dimethyl-2-oxo-trans-3-trans-5-nonadienyl)-3-methylbenzaldehyde (compound 2) after reductive release and aldol condensation. AfoD is the next enzyme in the biosynthesis sequence and hydroxylates the side chain at the benzylic position of compound 2. After benzylic hydroxylation, a furan ring is formed after five-member ring hemiacetal formation and water elimination. AfoF and afoC are proposed to oxidize the R-diketone proton and to reduce the unconjugated carbonyl group, respectively, to generate asperfuranone. Since no intermediates could be isolated from afoF and afoC deletants, the sequence of these two enzymes is not fully understood. Moreover, since afoC deletant still produces a small amount of asperfuranone, other endogenous oxidoreductases might catalyze the same reaction with much less efficiency. This is FAD-linked oxidoreductase afoF from Emericella nidulans (strain FGSC A4 / ATCC 38163 / CBS 112.46 / NRRL 194 / M139) (Aspergillus nidulans).